A 528-amino-acid chain; its full sequence is Tyrosine--tRNA ligase, cytoplasmic (528 aa).

Met-1 is modified (N-acetylmethionine). Gly-2 is subject to N-acetylglycine; in Tyrosine--tRNA ligase, cytoplasmic, N-terminally processed. Tyr-39 is a binding site for L-tyrosine. Tyr-39 serves as a coordination point for trans-resveratrol. The 'HIGH' region signature appears at Thr-44–Tyr-52. L-tyrosine contacts are provided by Tyr-166, Gln-170, Asp-173, and Gln-188. Gln-170 and Asp-173 together coordinate trans-resveratrol. Lys-197 is modified (N6-acetyllysine). Ser-205 is subject to Phosphoserine. Lys-206 carries the N6-acetyllysine modification. The 'KMSKS' region signature appears at Lys-222–Ser-226. A Nuclear localization signal motif is present at residues Lys-242–Lys-247. Residues Ala-339–Val-363 form a disordered region. The 105-residue stretch at Ile-364–Phe-468 folds into the tRNA-binding domain. Ser-386 bears the Phosphoserine mark. N6-acetyllysine occurs at positions 474, 482, and 490.

It belongs to the class-I aminoacyl-tRNA synthetase family. As to quaternary structure, homodimer. Interacts (when binding to resveratrol) with PARP1; interaction stimulates the poly-ADP-ribosyltransferase activity of PARP1.

It localises to the cytoplasm. The protein resides in the nucleus. It carries out the reaction tRNA(Tyr) + L-tyrosine + ATP = L-tyrosyl-tRNA(Tyr) + AMP + diphosphate + H(+). With respect to regulation, resveratrol strongly inhibits the tyrosine--tRNA ligase activity. Functionally, tyrosine--tRNA ligase that catalyzes the attachment of tyrosine to tRNA(Tyr) in a two-step reaction: tyrosine is first activated by ATP to form Tyr-AMP and then transferred to the acceptor end of tRNA(Tyr). Also acts as a positive regulator of poly-ADP-ribosylation in the nucleus, independently of its tyrosine--tRNA ligase activity. Activity is switched upon resveratrol-binding: resveratrol strongly inhibits the tyrosine--tRNA ligase activity and promotes relocalization to the nucleus, where YARS1 specifically stimulates the poly-ADP-ribosyltransferase activity of PARP1. The polypeptide is Tyrosine--tRNA ligase, cytoplasmic (Homo sapiens (Human)).